A 233-amino-acid polypeptide reads, in one-letter code: Large ribosomal subunit protein uL1 (233 aa).

It belongs to the universal ribosomal protein uL1 family. In terms of assembly, part of the 50S ribosomal subunit.

Functionally, binds directly to 23S rRNA. The L1 stalk is quite mobile in the ribosome, and is involved in E site tRNA release. Protein L1 is also a translational repressor protein, it controls the translation of the L11 operon by binding to its mRNA. The sequence is that of Large ribosomal subunit protein uL1 from Rhizobium johnstonii (strain DSM 114642 / LMG 32736 / 3841) (Rhizobium leguminosarum bv. viciae).